A 252-amino-acid polypeptide reads, in one-letter code: MNKVVVKNVTFGEGAPKICVPMVGKTVAALKEEAEMLQTIDLDVVEWRVDFFEDVKDLAKVEAALDEIRTILPETPILFTFRSAKEGGELAVSDEFYFELNETLARTGKVDLVDVELFNEEADVLRLIETAHKNNVKVVMSNHDFDKTPAKEEIVSRLIRMEALGADLPKIAVMPKSAGDVLTLLDATNTVSEKANQPIITMSMAGTGVISRLAGEVFGSAMTFGAAKKASAPGQIDVNELRHVLDLLHKQF.

Residues 46–48 (EWR) and Arg-82 contribute to the 3-dehydroquinate site. The active-site Proton donor/acceptor is the His-143. The active-site Schiff-base intermediate with substrate is the Lys-170. The 3-dehydroquinate site is built by Arg-212, Ser-231, and Gln-235.

This sequence belongs to the type-I 3-dehydroquinase family. In terms of assembly, homodimer.

It carries out the reaction 3-dehydroquinate = 3-dehydroshikimate + H2O. Its pathway is metabolic intermediate biosynthesis; chorismate biosynthesis; chorismate from D-erythrose 4-phosphate and phosphoenolpyruvate: step 3/7. Involved in the third step of the chorismate pathway, which leads to the biosynthesis of aromatic amino acids. Catalyzes the cis-dehydration of 3-dehydroquinate (DHQ) and introduces the first double bond of the aromatic ring to yield 3-dehydroshikimate. This chain is 3-dehydroquinate dehydratase, found in Listeria monocytogenes serotype 4a (strain HCC23).